The primary structure comprises 204 residues: E3 ubiquitin-protein ligase MPSR1 (204 aa).

An RING-type; atypical zinc finger spans residues C113–R154.

In terms of processing, autoubiquitinated.

The protein localises to the cytoplasm. It catalyses the reaction S-ubiquitinyl-[E2 ubiquitin-conjugating enzyme]-L-cysteine + [acceptor protein]-L-lysine = [E2 ubiquitin-conjugating enzyme]-L-cysteine + N(6)-ubiquitinyl-[acceptor protein]-L-lysine.. Functionally, E3 ubiquitin-protein ligase involved in protein quality control (PQC) under proteotoxic stress. Is essential to plant survival under proteotoxic stress. Functions by removing damaged proteins before they form cytotoxic aggregates. Recognizes misfolded proteins selectively and tethers polyubiquitin chains to the proteins directly for subsequent degradation by the 26S proteasome pathway. Targets misfolded proteins independently of cytoplasmic chaperones. Associates with the 26S proteasome and sustains the structural integrity of the proteasome complex at the initial stage of proteotoxic stress. Under normal conditions, MPSR1 becomes highly unstable by its autoubiquitination activity and is stabilized during proteotoxic stress by conjugating ubiquitins on misfolded proteins. The protein is E3 ubiquitin-protein ligase MPSR1 of Arabidopsis thaliana (Mouse-ear cress).